Consider the following 466-residue polypeptide: Coagulation factor VII (466 aa).

An N-terminal signal peptide occupies residues 1–20 (MVSQALRLLCLLLGLQGCLA). The propeptide occupies 21 to 60 (AGGVAKASGGETRDMPWKPGPHRVFVTQEEAHGVLHRRRR). The Gla domain occupies 61 to 105 (ANAFLEELRPGSLERECKEEQCSFEEAREIFKDAERTKLFWISYS). 4-carboxyglutamate occurs at positions 66, 67, 74, 76, 79, 80, 85, 86, 89, and 95. Cys77 and Cys82 are joined by a disulfide. In terms of domain architecture, EGF-like 1; calcium-binding spans 106–142 (DGDQCASSPCQNGGSCKDQLQSYICFCLPAFEGRNCE). 10 cysteine pairs are disulfide-bonded: Cys110/Cys121, Cys115/Cys130, Cys132/Cys141, Cys151/Cys162, Cys158/Cys172, Cys174/Cys187, Cys195/Cys322, Cys219/Cys224, Cys238/Cys254, and Cys370/Cys389. O-linked (Glc...) serine; alternate glycosylation occurs at Ser112. Ser112 carries an O-linked (Xyl...) serine; alternate glycan. O-linked (Fuc) serine glycosylation is present at Ser120. Asp123 is subject to (3R)-3-hydroxyaspartate. One can recognise an EGF-like 2 domain in the interval 147 to 188 (DQLICVNENGGCEQYCSDHTGTKRSCRCHEGYSLLADGVSCT). N-linked (GlcNAc...) asparagine glycosylation is present at Asn205. Positions 213–452 (IVGGKVCPKG…YIEWLQKLMR (240 aa)) constitute a Peptidase S1 domain. Catalysis depends on charge relay system residues His253 and Asp302. N-linked (GlcNAc...) asparagine glycosylation is present at Asn382. Asp398 lines the substrate pocket. A disulfide bridge connects residues Cys400 and Cys428. Ser404 (charge relay system) is an active-site residue.

It belongs to the peptidase S1 family. Heterodimer of a light chain and a heavy chain linked by a disulfide bond. Interacts (activated) with iripin-8, a serine protease inhibitor from Ixodes ricinus saliva. The vitamin K-dependent, enzymatic carboxylation of some glutamate residues allows the modified protein to bind calcium. Post-translationally, the iron and 2-oxoglutarate dependent 3-hydroxylation of aspartate and asparagine is (R) stereospecific within EGF domains. In terms of processing, O- and N-glycosylated. N-glycosylation at Asn-205 occurs cotranslationally and is mediated by STT3A-containing complexes, while glycosylation at Asn-382 is post-translational and is mediated STT3B-containing complexes before folding. O-fucosylated by POFUT1 on a conserved serine or threonine residue found in the consensus sequence C2-X(4,5)-[S/T]-C3 of EGF domains, where C2 and C3 are the second and third conserved cysteines. Can be either O-glucosylated or O-xylosylated at Ser-112 by POGLUT1 in vitro. Plasma.

It is found in the secreted. The enzyme catalyses Selective cleavage of Arg-|-Ile bond in factor X to form factor Xa.. Its function is as follows. Initiates the extrinsic pathway of blood coagulation. Serine protease that circulates in the blood in a zymogen form. Factor VII is converted to factor VIIa by factor Xa, factor XIIa, factor IXa, or thrombin by minor proteolysis. In the presence of tissue factor and calcium ions, factor VIIa then converts factor X to factor Xa by limited proteolysis. Factor VIIa also converts factor IX to factor IXa in the presence of tissue factor and calcium. The protein is Coagulation factor VII (F7) of Homo sapiens (Human).